The following is a 504-amino-acid chain: Cytochrome P450 6B6 (504 aa).

Residue cysteine 445 participates in heme binding.

The protein belongs to the cytochrome P450 family. Heme serves as cofactor.

The protein localises to the endoplasmic reticulum membrane. The protein resides in the microsome membrane. It carries out the reaction an organic molecule + reduced [NADPH--hemoprotein reductase] + O2 = an alcohol + oxidized [NADPH--hemoprotein reductase] + H2O + H(+). The protein is Cytochrome P450 6B6 (CYP6B6) of Helicoverpa armigera (Cotton bollworm).